A 568-amino-acid polypeptide reads, in one-letter code: Sesquiterpene synthase 14 (568 aa).

Mg(2+)-binding residues include D319, D323, D463, and E471. The short motif at 319-323 (DDLYD) is the DDXXD motif element.

It belongs to the terpene synthase family. Tpsa subfamily. Mg(2+) is required as a cofactor. It depends on Mn(2+) as a cofactor. Mostly expressed in roots, to a lower extent in flowers and, at low levels, in fruits.

It catalyses the reaction (2Z,6Z)-farnesyl diphosphate = (E)-alpha-bisabolene + diphosphate. The catalysed reaction is (2Z,6Z)-farnesyl diphosphate = beta-bisabolene + diphosphate. It carries out the reaction (2E,6E)-farnesyl diphosphate = beta-bisabolene + diphosphate. The enzyme catalyses (2E,6E)-farnesyl diphosphate = (Z)-gamma-bisabolene + diphosphate. It catalyses the reaction (2E,6E)-farnesyl diphosphate = (E)-gamma-bisabolene + diphosphate. The catalysed reaction is (2Z,6Z)-farnesyl diphosphate = (E)-gamma-bisabolene + diphosphate. It participates in secondary metabolite biosynthesis; terpenoid biosynthesis. Sesquiterpene synthase involved in the biosynthesis of volatile compounds. Mediates the conversion of (2E,6E)-farnesyl diphosphate ((EE)-FPP) into beta-bisabolene, and of (2Z,6Z)-farnesyl diphosphate ((ZZ)-FPP) into alpha-bisabolene, but also smaller amounts of (Z)-gamma-bisabolene, (E)-gamma-bisabolene and nerolidol. The polypeptide is Sesquiterpene synthase 14 (Solanum lycopersicum (Tomato)).